Here is a 583-residue protein sequence, read N- to C-terminus: Pre-mRNA-processing protein PRP40 (583 aa).

WW domains are found at residues 1–31 (MSIW…KPKE) and 42–72 (ENGW…IPAF). FF domains lie at 132 to 188 (KEEA…YLSN), 201 to 257 (TSKF…YIDT), 262 to 332 (QKES…YLKI), 354 to 413 (RDRI…FVDE), 427 to 488 (QTLI…KLQN), and 491 to 552 (RILE…FKPE). Threonine 576 carries the phosphothreonine modification.

The protein belongs to the PRPF40 family. In terms of assembly, interacts with CRM1, MSL5, PRP8, and the RNA polymerase II largest subunit (RPB1). MSL5, MUD2 and PRP40 interact to form the commitment complex 2 (CC2), a precursor of mature spliceosomes.

It localises to the nucleus. Required for pre-spliceosome formation, which is the first step of pre-mRNA splicing. This protein is associated with snRNP U1. Two commitment complexes, CC1 and CC2, have been defined in yeast. CC1 is a basal complex dependent only on the 5' splice site. CC2 is a complex of lower mobility and is dependent on a branchpoint as well as a 5' splice site region. This protein is involved in CC2 formation where it binds to the branchpoint binding protein MSL5, bridging the U1 snRNP-associated 5' splice site and the MSL5-associated branch point 3' intron splice site. The protein is Pre-mRNA-processing protein PRP40 (PRP40) of Saccharomyces cerevisiae (strain ATCC 204508 / S288c) (Baker's yeast).